A 318-amino-acid polypeptide reads, in one-letter code: Putative HTH-type transcriptional regulatory protein TK0539 (318 aa).

Positions 131–189 constitute an HTH cro/C1-type domain; it reads LRELREKHGYSVNELAQLLGVSRKSLLNYERGEQAVSLDVAIQLEEIFDEALAEPIDIL. The H-T-H motif DNA-binding region spans 142–161; the sequence is VNELAQLLGVSRKSLLNYER.

The chain is Putative HTH-type transcriptional regulatory protein TK0539 from Thermococcus kodakarensis (strain ATCC BAA-918 / JCM 12380 / KOD1) (Pyrococcus kodakaraensis (strain KOD1)).